The sequence spans 148 residues: Aspartate carbamoyltransferase regulatory chain (148 aa).

Residues cysteine 106, cysteine 111, cysteine 134, and cysteine 137 each coordinate Zn(2+).

This sequence belongs to the PyrI family. In terms of assembly, contains catalytic and regulatory chains. Zn(2+) serves as cofactor.

Its function is as follows. Involved in allosteric regulation of aspartate carbamoyltransferase. This Methanococcus maripaludis (strain C5 / ATCC BAA-1333) protein is Aspartate carbamoyltransferase regulatory chain.